The sequence spans 485 residues: N-succinylglutamate 5-semialdehyde dehydrogenase (485 aa).

NAD(+) is bound at residue Gly220–Gly225. Active-site residues include Glu243 and Cys278.

It belongs to the aldehyde dehydrogenase family. AstD subfamily.

The catalysed reaction is N-succinyl-L-glutamate 5-semialdehyde + NAD(+) + H2O = N-succinyl-L-glutamate + NADH + 2 H(+). Its pathway is amino-acid degradation; L-arginine degradation via AST pathway; L-glutamate and succinate from L-arginine: step 4/5. Functionally, catalyzes the NAD-dependent reduction of succinylglutamate semialdehyde into succinylglutamate. This chain is N-succinylglutamate 5-semialdehyde dehydrogenase, found in Aliivibrio salmonicida (strain LFI1238) (Vibrio salmonicida (strain LFI1238)).